The sequence spans 393 residues: Formate-dependent phosphoribosylglycinamide formyltransferase (393 aa).

N(1)-(5-phospho-beta-D-ribosyl)glycinamide-binding positions include 22-23 (EL) and glutamate 82. ATP is bound by residues arginine 114, lysine 155, 160–165 (SSGHGQ), 195–198 (EGFV), and glutamate 203. An ATP-grasp domain is found at 119–308 (RLAAEKLKLP…EFALHARAIL (190 aa)). Mg(2+) contacts are provided by glutamate 267 and glutamate 279. N(1)-(5-phospho-beta-D-ribosyl)glycinamide contacts are provided by residues aspartate 286, lysine 356, and 363–364 (RR).

This sequence belongs to the PurK/PurT family. In terms of assembly, homodimer.

The catalysed reaction is N(1)-(5-phospho-beta-D-ribosyl)glycinamide + formate + ATP = N(2)-formyl-N(1)-(5-phospho-beta-D-ribosyl)glycinamide + ADP + phosphate + H(+). It functions in the pathway purine metabolism; IMP biosynthesis via de novo pathway; N(2)-formyl-N(1)-(5-phospho-D-ribosyl)glycinamide from N(1)-(5-phospho-D-ribosyl)glycinamide (formate route): step 1/1. Functionally, involved in the de novo purine biosynthesis. Catalyzes the transfer of formate to 5-phospho-ribosyl-glycinamide (GAR), producing 5-phospho-ribosyl-N-formylglycinamide (FGAR). Formate is provided by PurU via hydrolysis of 10-formyl-tetrahydrofolate. The sequence is that of Formate-dependent phosphoribosylglycinamide formyltransferase from Histophilus somni (strain 129Pt) (Haemophilus somnus).